Consider the following 153-residue polypeptide: Ribosome maturation factor RimP (153 aa).

Belongs to the RimP family.

The protein localises to the cytoplasm. Required for maturation of 30S ribosomal subunits. This is Ribosome maturation factor RimP from Burkholderia pseudomallei (strain 1710b).